A 367-amino-acid chain; its full sequence is Uroporphyrinogen decarboxylase (367 aa).

Residue Met1 is modified to N-acetylmethionine. Coproporphyrinogen I is bound by residues Arg37, Ala39, Arg41, Arg50, Asp86, Tyr164, Ser219, and His339. The coproporphyrinogen III site is built by Arg37, Ala39, and Arg41. The coproporphyrinogen III site is built by Asp86, Tyr164, Ser219, and His339.

Belongs to the uroporphyrinogen decarboxylase family. Homodimer.

It localises to the cytoplasm. The protein resides in the cytosol. The enzyme catalyses uroporphyrinogen III + 4 H(+) = coproporphyrinogen III + 4 CO2. It carries out the reaction uroporphyrinogen I + 4 H(+) = coproporphyrinogen I + 4 CO2. It participates in porphyrin-containing compound metabolism; protoporphyrin-IX biosynthesis; coproporphyrinogen-III from 5-aminolevulinate: step 4/4. Functionally, catalyzes the sequential decarboxylation of the four acetate side chains of uroporphyrinogen to form coproporphyrinogen and participates in the fifth step in the heme biosynthetic pathway. Isomer I or isomer III of uroporphyrinogen may serve as substrate, but only coproporphyrinogen III can ultimately be converted to heme. In vitro also decarboxylates pentacarboxylate porphyrinogen I. This Pongo abelii (Sumatran orangutan) protein is Uroporphyrinogen decarboxylase.